A 95-amino-acid chain; its full sequence is Co-chaperonin GroES (95 aa).

Belongs to the GroES chaperonin family. Heptamer of 7 subunits arranged in a ring. Interacts with the chaperonin GroEL.

It is found in the cytoplasm. In terms of biological role, together with the chaperonin GroEL, plays an essential role in assisting protein folding. The GroEL-GroES system forms a nano-cage that allows encapsulation of the non-native substrate proteins and provides a physical environment optimized to promote and accelerate protein folding. GroES binds to the apical surface of the GroEL ring, thereby capping the opening of the GroEL channel. This is Co-chaperonin GroES from Marinobacter nauticus (strain ATCC 700491 / DSM 11845 / VT8) (Marinobacter aquaeolei).